The sequence spans 506 residues: Galactose/methyl galactoside import ATP-binding protein MglA (506 aa).

ABC transporter domains are found at residues 14-249 (LEMS…VGRS) and 264-506 (VILE…SLHL). 46–53 (GENGAGKS) contacts ATP.

It belongs to the ABC transporter superfamily. Galactose/methyl galactoside importer (TC 3.A.1.2.3) family. In terms of assembly, the complex is composed of one ATP-binding protein (MglA), two transmembrane proteins (MglC) and a solute-binding protein (MglB).

Its subcellular location is the cell inner membrane. The enzyme catalyses D-galactose(out) + ATP + H2O = D-galactose(in) + ADP + phosphate + H(+). It carries out the reaction methyl beta-D-galactoside(out) + ATP + H2O = methyl beta-D-galactoside(in) + ADP + phosphate + H(+). Functionally, part of the ABC transporter complex MglABC involved in galactose/methyl galactoside import. Responsible for energy coupling to the transport system. This chain is Galactose/methyl galactoside import ATP-binding protein MglA, found in Yersinia pestis bv. Antiqua (strain Antiqua).